A 367-amino-acid polypeptide reads, in one-letter code: D-alanine--D-alanine ligase (367 aa).

In terms of domain architecture, ATP-grasp spans 150-357 (KKLLTAAGLP…YPTLLATMVE (208 aa)). Position 178–233 (178–233 (RERLGLPVFVKPSRGGSSIGVSRVTAWDALPAAIELARRHDPKVIVEAAIPGRELE)) interacts with ATP. Positions 312, 324, and 326 each coordinate Mg(2+).

The protein belongs to the D-alanine--D-alanine ligase family. The cofactor is Mg(2+). Mn(2+) is required as a cofactor.

The protein localises to the cytoplasm. The enzyme catalyses 2 D-alanine + ATP = D-alanyl-D-alanine + ADP + phosphate + H(+). Its pathway is cell wall biogenesis; peptidoglycan biosynthesis. In terms of biological role, cell wall formation. In Mycolicibacterium vanbaalenii (strain DSM 7251 / JCM 13017 / BCRC 16820 / KCTC 9966 / NRRL B-24157 / PYR-1) (Mycobacterium vanbaalenii), this protein is D-alanine--D-alanine ligase.